An 82-amino-acid polypeptide reads, in one-letter code: Putative membrane protein insertion efficiency factor (82 aa).

This sequence belongs to the UPF0161 family.

Its subcellular location is the cell inner membrane. Could be involved in insertion of integral membrane proteins into the membrane. The sequence is that of Putative membrane protein insertion efficiency factor from Colwellia psychrerythraea (strain 34H / ATCC BAA-681) (Vibrio psychroerythus).